We begin with the raw amino-acid sequence, 270 residues long: 2-epi-5-epi-valiolone 7-phosphate 2-epimerase (270 aa).

Catalysis depends on proton donor/acceptor residues Glu143 and Glu236.

It belongs to the hyi family.

The catalysed reaction is 2-epi-5-epi-valiolone 7-phosphate = 5-epi-valiolone 7-phosphate. Involved in the biosynthesis of the alpha-glucosidase inhibitor acarbose. Catalyzes the 2-epimerisation of 2-epi-5-epivaliolone 7-phosphate to yield 5-epi-valiolone 7-phosphate. The chain is 2-epi-5-epi-valiolone 7-phosphate 2-epimerase (acbO) from Actinoplanes sp. (strain ATCC 31044 / CBS 674.73 / SE50/110).